A 179-amino-acid chain; its full sequence is Ribosome maturation factor RimM (179 aa).

Residues 100-176 (KEEFHLLELI…FIIINPPNGL (77 aa)) form the PRC barrel domain.

The protein belongs to the RimM family. Binds ribosomal protein uS19.

Its subcellular location is the cytoplasm. Its function is as follows. An accessory protein needed during the final step in the assembly of 30S ribosomal subunit, possibly for assembly of the head region. Essential for efficient processing of 16S rRNA. May be needed both before and after RbfA during the maturation of 16S rRNA. It has affinity for free ribosomal 30S subunits but not for 70S ribosomes. The chain is Ribosome maturation factor RimM from Prochlorococcus marinus (strain MIT 9215).